The following is a 610-amino-acid chain: Pentatricopeptide repeat-containing protein At3g15590, mitochondrial (610 aa).

The transit peptide at 1–71 (MYSLSRILQR…FSRFFGIHKL (71 aa)) directs the protein to the mitochondrion. A disordered region spans residues 88-142 (EELSESEEAVPVSGDVPEGVVDDDSLFEPELGSDNDDLEIEEKHSKDGGKPTKKR). The span at 107–127 (VVDDDSLFEPELGSDNDDLEI) shows a compositional bias: acidic residues. A compositionally biased stretch (basic and acidic residues) spans 128–137 (EEKHSKDGGK). PPR repeat units lie at residues 241–275 (GEVVYRTLLANCVLKHHVNKAEDIFNKMKELKFPT), 276–309 (SVFACNQLLLLYSMHDRKKISDVLLLMERENIKP), 310–344 (SRATYHFLINSKGLAGDITGMEKIVETIKEEGIEL), 345–379 (DPELQSILAKYYIRAGLKERAQDLMKEIEGKGLQQ), 380–410 (TPWVCRSLLPLYADIGDSDNVRRLSRFVDQN), 412–442 (RYDNCISAIKAWGKLKEVEEAEAVFERLVEK), 447–481 (PMMPYFALMEIYTENKMLAKGRDLVKRMGNAGIAI), 482–517 (GPSTWHALVKLYIKAGEVGKAELILNRATKDNKMRP), and 518–552 (MFTTYMAILEEYAKRGDVHNTEKVFMKMKRASYAA).

This sequence belongs to the PPR family. P subfamily.

The protein resides in the mitochondrion. The polypeptide is Pentatricopeptide repeat-containing protein At3g15590, mitochondrial (Arabidopsis thaliana (Mouse-ear cress)).